The sequence spans 434 residues: Beta-enolase (434 aa).

N-acetylalanine is present on alanine 2. Residue threonine 72 is modified to Phosphothreonine. 2 positions are modified to phosphoserine: serine 83 and serine 157. The substrate site is built by histidine 158 and glutamate 167. Serine 176 carries the post-translational modification Phosphoserine. The residue at position 205 (threonine 205) is a Phosphothreonine. The active-site Proton donor is the glutamate 210. Threonine 229 is modified (phosphothreonine). Tyrosine 236 is modified (phosphotyrosine). A Mg(2+)-binding site is contributed by aspartate 245. Position 263 is a phosphoserine (serine 263). Positions 293 and 318 each coordinate substrate. Residues glutamate 293 and aspartate 318 each contribute to the Mg(2+) site. Lysine 343 functions as the Proton acceptor in the catalytic mechanism. Residues 370–373 (SHRS) and lysine 394 contribute to the substrate site.

Belongs to the enolase family. Mammalian enolase is composed of 3 isozyme subunits, alpha, beta and gamma, which can form homodimers or heterodimers which are cell-type and development-specific. Interacts with PNKD. Mg(2+) is required as a cofactor. The alpha/alpha homodimer is expressed in embryo and in most adult tissues. The alpha/beta heterodimer and the beta/beta homodimer are found in striated muscle, and the alpha/gamma heterodimer and the gamma/gamma homodimer in neurons.

The protein localises to the cytoplasm. The catalysed reaction is (2R)-2-phosphoglycerate = phosphoenolpyruvate + H2O. It functions in the pathway carbohydrate degradation; glycolysis; pyruvate from D-glyceraldehyde 3-phosphate: step 4/5. Its function is as follows. Glycolytic enzyme that catalyzes the conversion of 2-phosphoglycerate to phosphoenolpyruvate. Appears to have a function in striated muscle development and regeneration. This chain is Beta-enolase (Eno3), found in Rattus norvegicus (Rat).